Here is a 986-residue protein sequence, read N- to C-terminus: Bifunctional glutamine synthetase adenylyltransferase/adenylyl-removing enzyme (986 aa).

Residues 1-473 (MTSSAPGNAD…HYARLFEGDP (473 aa)) form an adenylyl removase region. The adenylyl transferase stretch occupies residues 478–986 (SLPPVNYGAG…RRVFTALLER (509 aa)).

It belongs to the GlnE family. Mg(2+) is required as a cofactor.

It carries out the reaction [glutamine synthetase]-O(4)-(5'-adenylyl)-L-tyrosine + phosphate = [glutamine synthetase]-L-tyrosine + ADP. The enzyme catalyses [glutamine synthetase]-L-tyrosine + ATP = [glutamine synthetase]-O(4)-(5'-adenylyl)-L-tyrosine + diphosphate. Its function is as follows. Involved in the regulation of glutamine synthetase GlnA, a key enzyme in the process to assimilate ammonia. When cellular nitrogen levels are high, the C-terminal adenylyl transferase (AT) inactivates GlnA by covalent transfer of an adenylyl group from ATP to specific tyrosine residue of GlnA, thus reducing its activity. Conversely, when nitrogen levels are low, the N-terminal adenylyl removase (AR) activates GlnA by removing the adenylyl group by phosphorolysis, increasing its activity. The regulatory region of GlnE binds the signal transduction protein PII (GlnB) which indicates the nitrogen status of the cell. This chain is Bifunctional glutamine synthetase adenylyltransferase/adenylyl-removing enzyme, found in Bradyrhizobium sp. (strain ORS 278).